A 466-amino-acid chain; its full sequence is tRNA(Ile)-lysidine synthase (466 aa).

Position 26-31 (26-31) interacts with ATP; that stretch reads SGGSDS.

The protein belongs to the tRNA(Ile)-lysidine synthase family.

It localises to the cytoplasm. It carries out the reaction cytidine(34) in tRNA(Ile2) + L-lysine + ATP = lysidine(34) in tRNA(Ile2) + AMP + diphosphate + H(+). Ligates lysine onto the cytidine present at position 34 of the AUA codon-specific tRNA(Ile) that contains the anticodon CAU, in an ATP-dependent manner. Cytidine is converted to lysidine, thus changing the amino acid specificity of the tRNA from methionine to isoleucine. In Oceanobacillus iheyensis (strain DSM 14371 / CIP 107618 / JCM 11309 / KCTC 3954 / HTE831), this protein is tRNA(Ile)-lysidine synthase.